We begin with the raw amino-acid sequence, 406 residues long: Putative colanic acid biosynthesis glycosyltransferase WcaL (406 aa).

Belongs to the glycosyltransferase group 1 family. Glycosyltransferase 4 subfamily.

It participates in slime biogenesis; slime polysaccharide biosynthesis. This Salmonella typhimurium (strain LT2 / SGSC1412 / ATCC 700720) protein is Putative colanic acid biosynthesis glycosyltransferase WcaL (wcaL).